The following is a 131-amino-acid chain: Large ribosomal subunit protein eL32 (131 aa).

The protein belongs to the eukaryotic ribosomal protein eL32 family.

This is Large ribosomal subunit protein eL32 (rpl32e) from Sulfurisphaera tokodaii (strain DSM 16993 / JCM 10545 / NBRC 100140 / 7) (Sulfolobus tokodaii).